The chain runs to 83 residues: UPF0297 protein DSY2420 (83 aa).

Belongs to the UPF0297 family.

This is UPF0297 protein DSY2420 from Desulfitobacterium hafniense (strain Y51).